The following is a 408-amino-acid chain: Zinc-regulated transporter 1 (408 aa).

A run of 3 helical transmembrane segments spans residues 64–84, 101–121, and 141–161; these read IGAI…PLVL, LFAR…HLLA, and WAPG…VLLN. 2 positions are modified to phosphothreonine: threonine 234 and threonine 237. Transmembrane regions (helical) follow at residues 254 to 274, 279 to 299, 315 to 335, 351 to 371, and 387 to 407; these read FIIL…TTAV, FKTL…GLGS, WVLG…GLGV, GVLD…ELLA, and LIYL…LGKW.

This sequence belongs to the ZIP transporter (TC 2.A.5) family.

It is found in the endoplasmic reticulum membrane. Its function is as follows. High-affinity zinc transport protein. Regulates intracellular zinc levels. This is Zinc-regulated transporter 1 (zrt1) from Schizosaccharomyces pombe (strain 972 / ATCC 24843) (Fission yeast).